A 538-amino-acid polypeptide reads, in one-letter code: Retinoblastoma-binding protein 5 (538 aa).

2 WD repeats span residues 22-63 (DCIS…KIIS) and 64-103 (AHIHPVCSLCWSRDGHKLVSASTDNIVSQWDVLSGDCDQR). A Glycyl lysine isopeptide (Lys-Gly) (interchain with G-Cter in SUMO2) cross-link involves residue Lys129. 4 WD repeats span residues 148-188 (DDDS…LVAS), 196-235 (SNTTAIKSIEFARKGSCFLINTADRIIRVYDGREILTCGR), 249-291 (VNRT…KILH), and 293-331 (TRGELLLDVAWHPVRPIIASISSGVVSIWAQNQVENWSA). The residue at position 252 (Thr252) is a Phosphothreonine; by CDK1. The interaction with ASH2L stretch occupies residues 330 to 366 (SAFAPDFKELDENVEYEERESEFDIEDEDKSEPEQTG). The span at 344–360 (EYEERESEFDIEDEDKS) shows a compositional bias: acidic residues. The interval 344–377 (EYEERESEFDIEDEDKSEPEQTGADAAEDEEVDV) is disordered. Ser350 is subject to Phosphoserine. The interaction with WDR5 stretch occupies residues 371–380 (EDEEVDVTSV). Phosphoserine occurs at positions 388 and 389. Positions 408-519 (VEDPEENPYG…LPLEGSTKGK (112 aa)) are disordered. Positions 479-490 (SKKKQAGRPKGS) are enriched in basic residues. The segment covering 491–510 (KGKEKDSPFKPKLYKGDRGL) has biased composition (basic and acidic residues). Ser497 bears the Phosphoserine; by CDK1 mark. Ser525 is modified (phosphoserine).

In terms of assembly, component of the SET1 complex, at least composed of the catalytic subunit (SETD1A or SETD1B), WDR5, WDR82, RBBP5, ASH2L/ASH2, CXXC1/CFP1, HCFC1 and DPY30. Core component of several methyltransferase-containing complexes including MLL1/MLL, MLL2/3 (also named ASCOM complex) and MLL4/WBP7. Each complex is at least composed of ASH2L, RBBP5, WDR5, DPY30, one or more specific histone methyltransferases (KMT2A/MLL1, KMT2D/MLL2, KMT2C/MLL3 and KMT2B/MLL4), and the facultative components PAGR1, BACC1, CHD8, E2F6, HCFC1, HCFC2, HSP70, INO80C, KDM6A, KANSL1, LAS1L, MAX, MCRS1, MEN1, MGA, MYST1/MOF, NCOA6, PAXIP1/PTIP, PELP1, PHF20, PRP31, RING2, RUVB1/TIP49A, RUVB2/TIP49B, SENP3, TAF1, TAF4, TAF6, TAF7, TAF9, TEX10 and alpha- and beta-tubulin. Component of a histone methylation complex composed of at least ZNF335, RBBP5, ASH2L and WDR5; the complex may have histone H3-specific methyltransferase activity, however does not have specificity for 'Lys-4' of histone H3. Interacts with ZNF335. Interacts with ASH2L; the interaction is direct. Interacts with WDR5; the interaction is direct. Components of the ZNF335-RBBP5-ASH2L-WDR5 histone methylation complex may associate with components of a nuclear receptor-mediated transcription complex to form a complex at least composed of ZNF335, HCFC1, CCAR2, EMSY, MKI67, RBBP5, ASH2L and WDR5. Within this complex interacts with EMSY. Found in a complex with RBBP5, ASH2L, DPY30, KMT2A, KMT2D and WDR5. Interacts with SETD1A. Interacts with WDR82.

It localises to the nucleus. Functionally, in embryonic stem (ES) cells, plays a crucial role in the differentiation potential, particularly along the neural lineage, regulating gene induction and H3 'Lys-4' methylation at key developmental loci, including that mediated by retinoic acid. Does not affect ES cell self-renewal. Component or associated component of some histone methyltransferase complexes which regulates transcription through recruitment of those complexes to gene promoters. As part of the MLL1/MLL complex, involved in mono-, di- and trimethylation at 'Lys-4' of histone H3. Histone H3 'Lys-4' methylation represents a specific tag for epigenetic transcriptional activation. In association with ASH2L and WDR5, stimulates the histone methyltransferase activities of KMT2A, KMT2B, KMT2C, KMT2D, SETD1A and SETD1B. In Mus musculus (Mouse), this protein is Retinoblastoma-binding protein 5 (Rbbp5).